The chain runs to 302 residues: Adipolin (302 aa).

The N-terminal stretch at 1 to 20 (MRRWAWAAVVVLLGPQLVLL) is a signal peptide. 2 disordered regions span residues 28–68 (EAQR…GPEF) and 86–110 (ALRK…PPGA). Asparagine 43 carries an N-linked (GlcNAc...) asparagine glycan. Residues 86–100 (ALRKRCGSRDKKPRD) show a composition bias toward basic and acidic residues. A C1q domain is found at 147-302 (LRLVGEAFHC…SSFSGLLLGT (156 aa)).

It belongs to the adipolin/erythroferrone family. Homomultimer; disulfide-linked. May interact with ERFE. Post-translationally, processed into Adipolin fC1QTNF12 and Adipolin gC1QTNF12 by FURIN. Insulin enhances endogenous C1QTNF12 cleavage. In terms of tissue distribution, predominantly expressed by adipose tissues.

Its subcellular location is the secreted. Functionally, insulin-sensitizing adipocyte-secreted protein (adipokine) that regulates glucose metabolism in liver and adipose tissue. Promotes glucose uptake in adipocytes and suppresses de novo glucose production in hepatocytes via the PI3K-Akt signaling pathway. Administration lead to reduction of blood glucose. Able to attenuate inflammation in fat tissue. In Homo sapiens (Human), this protein is Adipolin.